The primary structure comprises 85 residues: CDC42 small effector protein 2 (85 aa).

Residues Cys10 and Cys11 are each lipidated (S-palmitoyl cysteine). Positions 29 to 42 (IGEPTNFVHTAHVG) constitute a CRIB domain.

It belongs to the CDC42SE/SPEC family.

The protein resides in the cytoplasm. Its subcellular location is the cytoskeleton. It is found in the cell membrane. In terms of biological role, probably involved in the organization of the actin cytoskeleton by acting downstream of CDC42, inducing actin filament assembly. In Danio rerio (Zebrafish), this protein is CDC42 small effector protein 2 (cdc42se2).